A 137-amino-acid polypeptide reads, in one-letter code: Ubiquitin-conjugating enzyme variant MMS2 (137 aa).

A UBC core domain is found at 5-137 (PRNFRLLEEL…LRQPKEGETF (133 aa)). Ser71 carries the post-translational modification Phosphoserine.

It belongs to the ubiquitin-conjugating enzyme family. Heterodimer with UBC13.

In terms of biological role, has a role in the DNA error-free postreplication repair (PRR) pathway. Lacks catalytic activity by itself. The UBC13/MMS2 heterodimer catalyzes the synthesis of non-canonical poly-ubiquitin chains that are linked through 'Lys-63'. This is Ubiquitin-conjugating enzyme variant MMS2 (MMS2) from Saccharomyces cerevisiae (strain ATCC 204508 / S288c) (Baker's yeast).